The chain runs to 592 residues: Aspartate--tRNA ligase (592 aa).

E177 lines the L-aspartate pocket. The interval 201–204 is aspartate; it reads QIFK. R223 is an L-aspartate binding site. Residues 223–225 and Q232 each bind ATP; that span reads RDE. Residue H451 participates in L-aspartate binding. E485 is an ATP binding site. R492 provides a ligand contact to L-aspartate. Residue 537–540 coordinates ATP; sequence GLDR.

This sequence belongs to the class-II aminoacyl-tRNA synthetase family. Type 1 subfamily. In terms of assembly, homodimer.

The protein resides in the cytoplasm. The catalysed reaction is tRNA(Asp) + L-aspartate + ATP = L-aspartyl-tRNA(Asp) + AMP + diphosphate. Catalyzes the attachment of L-aspartate to tRNA(Asp) in a two-step reaction: L-aspartate is first activated by ATP to form Asp-AMP and then transferred to the acceptor end of tRNA(Asp). The sequence is that of Aspartate--tRNA ligase from Bacillus licheniformis (strain ATCC 14580 / DSM 13 / JCM 2505 / CCUG 7422 / NBRC 12200 / NCIMB 9375 / NCTC 10341 / NRRL NRS-1264 / Gibson 46).